The following is a 197-amino-acid chain: GTP cyclohydrolase-2 (197 aa).

Residue 50–54 (RIHSE) coordinates GTP. The Zn(2+) site is built by Cys55, Cys66, and Cys68. GTP contacts are provided by residues Gln71, 93–95 (EGR), and Thr115. The Proton acceptor role is filled by Asp127. The Nucleophile role is filled by Arg129. GTP contacts are provided by Thr150 and Lys155.

This sequence belongs to the GTP cyclohydrolase II family. The cofactor is Zn(2+).

The enzyme catalyses GTP + 4 H2O = 2,5-diamino-6-hydroxy-4-(5-phosphoribosylamino)-pyrimidine + formate + 2 phosphate + 3 H(+). Its pathway is cofactor biosynthesis; riboflavin biosynthesis; 5-amino-6-(D-ribitylamino)uracil from GTP: step 1/4. In terms of biological role, catalyzes the conversion of GTP to 2,5-diamino-6-ribosylamino-4(3H)-pyrimidinone 5'-phosphate (DARP), formate and pyrophosphate. The polypeptide is GTP cyclohydrolase-2 (Aeromonas hydrophila subsp. hydrophila (strain ATCC 7966 / DSM 30187 / BCRC 13018 / CCUG 14551 / JCM 1027 / KCTC 2358 / NCIMB 9240 / NCTC 8049)).